The sequence spans 156 residues: Protein-export protein SecB (156 aa).

This sequence belongs to the SecB family. As to quaternary structure, homotetramer, a dimer of dimers. One homotetramer interacts with 1 SecA dimer.

Its subcellular location is the cytoplasm. Its function is as follows. One of the proteins required for the normal export of preproteins out of the cell cytoplasm. It is a molecular chaperone that binds to a subset of precursor proteins, maintaining them in a translocation-competent state. It also specifically binds to its receptor SecA. This is Protein-export protein SecB from Serratia proteamaculans (strain 568).